Reading from the N-terminus, the 897-residue chain is DNA polymerase I (897 aa).

In terms of domain architecture, 5'-3' exonuclease spans 1 to 317; sequence MEQPVIKEGT…ILDNTPALDN (317 aa). The region spanning 318–494 is the 3'-5' exonuclease domain; sequence APKKSRMIVL…RLCEYFEKGG (177 aa). Positions 498–896 are polymerase; the sequence is DLLTLARDIE…FIAKRWNELK (399 aa).

Belongs to the DNA polymerase type-A family. As to quaternary structure, single-chain monomer with multiple functions.

The enzyme catalyses DNA(n) + a 2'-deoxyribonucleoside 5'-triphosphate = DNA(n+1) + diphosphate. Functionally, in addition to polymerase activity, this DNA polymerase exhibits 3'-5' and 5'-3' exonuclease activity. This is DNA polymerase I (polA) from Helicobacter pylori (strain J99 / ATCC 700824) (Campylobacter pylori J99).